The sequence spans 502 residues: ATP synthase subunit alpha (502 aa).

The segment at 115–134 is disordered; the sequence is IDGQGPINTTKTRPVEQKAT. 169–176 serves as a coordination point for ATP; the sequence is GDRQTGKT.

This sequence belongs to the ATPase alpha/beta chains family. In terms of assembly, F-type ATPases have 2 components, CF(1) - the catalytic core - and CF(0) - the membrane proton channel. CF(1) has five subunits: alpha(3), beta(3), gamma(1), delta(1), epsilon(1). CF(0) has three main subunits: a(1), b(2) and c(9-12). The alpha and beta chains form an alternating ring which encloses part of the gamma chain. CF(1) is attached to CF(0) by a central stalk formed by the gamma and epsilon chains, while a peripheral stalk is formed by the delta and b chains.

It is found in the cell membrane. The catalysed reaction is ATP + H2O + 4 H(+)(in) = ADP + phosphate + 5 H(+)(out). Produces ATP from ADP in the presence of a proton gradient across the membrane. The alpha chain is a regulatory subunit. The polypeptide is ATP synthase subunit alpha (Staphylococcus haemolyticus (strain JCSC1435)).